Reading from the N-terminus, the 424-residue chain is Serine hydroxymethyltransferase (424 aa).

Residues Leu118 and Gly122–Leu124 each bind (6S)-5,6,7,8-tetrahydrofolate. Lys227 bears the N6-(pyridoxal phosphate)lysine mark. Residue Ser351–Phe353 coordinates (6S)-5,6,7,8-tetrahydrofolate.

Belongs to the SHMT family. Homodimer. Requires pyridoxal 5'-phosphate as cofactor.

It localises to the cytoplasm. The catalysed reaction is (6R)-5,10-methylene-5,6,7,8-tetrahydrofolate + glycine + H2O = (6S)-5,6,7,8-tetrahydrofolate + L-serine. It participates in one-carbon metabolism; tetrahydrofolate interconversion. The protein operates within amino-acid biosynthesis; glycine biosynthesis; glycine from L-serine: step 1/1. Functionally, catalyzes the reversible interconversion of serine and glycine with tetrahydrofolate (THF) serving as the one-carbon carrier. This reaction serves as the major source of one-carbon groups required for the biosynthesis of purines, thymidylate, methionine, and other important biomolecules. Also exhibits THF-independent aldolase activity toward beta-hydroxyamino acids, producing glycine and aldehydes, via a retro-aldol mechanism. The chain is Serine hydroxymethyltransferase from Pseudothermotoga lettingae (strain ATCC BAA-301 / DSM 14385 / NBRC 107922 / TMO) (Thermotoga lettingae).